We begin with the raw amino-acid sequence, 2214 residues long: Multifunctional protein URA2 (2214 aa).

Ala-2 carries the N-acetylalanine modification. The interval 2–400 (ATIAPTAPIT…PGPRDTEFLF (399 aa)) is GATase (Glutamine amidotransferase). The L-glutamine site is built by Ser-64, Gly-273, and Gly-275. The Glutamine amidotransferase type-1 domain maps to 228–413 (RILAIDVGMK…IQAVKEFKYT (186 aa)). The active-site Nucleophile; for GATase activity is Cys-302. Residues Leu-303, Gln-306, Asn-344, Gly-346, and Phe-347 each contribute to the L-glutamine site. Active-site for GATase activity residues include His-386 and Glu-388. Positions 401–440 (DVFIQAVKEFKYTQVLKPIAFPGGLLEDNVKAHPRIEAKK) are linker. The interval 440-980 (KVLVLGSGGL…DSHDLSFDDH (541 aa)) is CPSase A. Residues 440–1482 (KVLVLGSGGL…TNVKCAKLLI (1043 aa)) form a CPSase (Carbamoyl phosphate synthase) region. 12 residues coordinate ATP: Arg-558, Arg-598, Gly-604, Gly-605, Lys-635, Met-637, Glu-642, Gly-668, Ile-669, His-670, Gln-711, and Glu-725. ATP-grasp domains follow at residues 562–754 (SNAI…KLGL) and 1099–1290 (SRML…KAIM). Mg(2+) is bound by residues Gln-711, Glu-725, and Asn-727. Mn(2+) is bound by residues Gln-711, Glu-725, and Asn-727. Residues 981–1482 (GVMVLGSGVY…TNVKCAKLLI (502 aa)) form a CPSase B region. Residues Arg-1135, Lys-1174, Ile-1176, Glu-1181, Gly-1206, Val-1207, His-1208, Ser-1209, Gln-1249, and Glu-1261 each contribute to the ATP site. Gln-1249, Glu-1261, and Asn-1263 together coordinate Mg(2+). Residues Gln-1249, Glu-1261, and Asn-1263 each coordinate Mn(2+). One can recognise an MGS-like domain in the interval 1356–1508 (FKLPKKNILL…QTSHRTITLP (153 aa)). Positions 1483–1492 (EAISRNITLD) are linker. A defective DHOase domain region spans residues 1493–1821 (VSERDAQTSH…YNGETLVLSG (329 aa)). The interval 1822–1909 (ELVSPGAKGK…NLIRSNNPFR (88 aa)) is linker. Lys-1853 is covalently cross-linked (Glycyl lysine isopeptide (Lys-Gly) (interchain with G-Cter in ubiquitin)). Ser-1857 bears the Phosphoserine; by PKA mark. The tract at residues 1910–2214 (GRHILSIKQF…LLAMVMGVDM (305 aa)) is ATCase (Aspartate transcarbamylase). Residues Arg-1962 and Thr-1963 each coordinate carbamoyl phosphate. Lys-1990 contacts L-aspartate. 3 residues coordinate carbamoyl phosphate: Arg-2011, His-2039, and Gln-2042. L-aspartate is bound by residues Arg-2072 and Arg-2134. Leu-2173 and Pro-2174 together coordinate carbamoyl phosphate.

The protein in the N-terminal section; belongs to the CarA family. It in the 2nd section; belongs to the CarB family. This sequence in the 3rd section; belongs to the metallo-dependent hydrolases superfamily. DHOase family. CAD subfamily. In the C-terminal section; belongs to the aspartate/ornithine carbamoyltransferase superfamily. ATCase family. It depends on Mg(2+) as a cofactor. Mn(2+) serves as cofactor.

It is found in the cytoplasm. It carries out the reaction hydrogencarbonate + L-glutamine + 2 ATP + H2O = carbamoyl phosphate + L-glutamate + 2 ADP + phosphate + 2 H(+). The catalysed reaction is L-glutamine + H2O = L-glutamate + NH4(+). The enzyme catalyses hydrogencarbonate + NH4(+) + 2 ATP = carbamoyl phosphate + 2 ADP + phosphate + 2 H(+). It catalyses the reaction carbamoyl phosphate + L-aspartate = N-carbamoyl-L-aspartate + phosphate + H(+). It participates in pyrimidine metabolism; UMP biosynthesis via de novo pathway; (S)-dihydroorotate from bicarbonate: step 1/3. The protein operates within pyrimidine metabolism; UMP biosynthesis via de novo pathway; (S)-dihydroorotate from bicarbonate: step 2/3. With respect to regulation, both CPSase and ATCase activities are feedback inhibited by the end product UTP. Its function is as follows. Multifunctional protein that encodes the first 2 enzymatic activities of the de novo pyrimidine pathway: carbamoylphosphate synthetase (CPSase; EC 6.3.5.5) and aspartate transcarbamylase (ATCase; EC 2.1.3.2). The CPSase-function is accomplished in 2 steps, by a glutamine-dependent amidotransferase activity (GATase) that binds and cleaves glutamine to produce ammonia, followed by an ammonium-dependent carbamoyl phosphate synthetase, which reacts with the ammonia, hydrogencarbonate and ATP to form carbamoyl phosphate. The endogenously produced carbamoyl phosphate is sequestered and channeled to the ATCase active site. ATCase then catalyzes the formation of carbamoyl-L-aspartate from L-aspartate and carbamoyl phosphate. The sequence is that of Multifunctional protein URA2 (URA2) from Saccharomyces cerevisiae (strain ATCC 204508 / S288c) (Baker's yeast).